A 571-amino-acid polypeptide reads, in one-letter code: Optineurin (571 aa).

Disordered regions lie at residues 1-32 (MSHQPLSCLTEKGDSPSESTGNGPPHLAHPNL) and 100-144 (LSHE…DQLR). Residues 38-170 (EELLQQMKEL…VSELQLKLNS (133 aa)) are a coiled coil. Residues 58–209 (MKLNNQAMKG…GPTRTVSIGT (152 aa)) form an interaction with Rab8 region. Residues 100-143 (LSHENEKLKEELGKLKGKSERSSEDPTDDSRLPRAEAEQEKDQL) are compositionally biased toward basic and acidic residues. The short motif at 176-181 (DSFVEI) is the LIR element. A Phosphoserine; by TBK1 modification is found at S177. Residues 186–197 (GEAEGSVKEIKH) are compositionally biased toward basic and acidic residues. 2 disordered regions span residues 186–210 (GEAEGSVKEIKHSPGPTRTVSIGTS) and 255–291 (VSDFEKKASNRSEIETQTEGSTEKENEEEKGPETVGS). At S198 the chain carries Phosphoserine. Residues 201 to 210 (PTRTVSIGTS) show a composition bias toward polar residues. Positions 233 to 502 (CLREGNQKVE…LLKENDAFED (270 aa)) form a coiled coil. Composition is skewed to basic and acidic residues over residues 255–268 (VSDFEKKASNRSEI) and 275–286 (STEKENEEEKGP). S336 bears the Phosphoserine mark. Residues 405-571 (TRKESEKVDR…LQIHVMDCII (167 aa)) form an interaction with HD region. The tract at residues 406-514 (RKESEKVDRA…RQSLMEMQSR (109 aa)) is interaction with MYO6. A UBAN motif is present at residues 468 to 473 (DFHAER). Position 520 is a phosphoserine (S520). A CCHC NOA-type zinc finger spans residues 541–571 (QRNIPIHSCPKCGEVLPDIDTLQIHVMDCII). The Zn(2+) site is built by C549, C552, H565, and C569.

Self-associates. Interacts with HD. Interacts with GTF3A. Interacts with MYO6. Interacts (via UBAN) with ubiquitinated TFRC. Interacts with GTP-bound Rab8 (RAB8A and/or RAB8B). Interacts with TBC1D17. Interacts with TBK1. Interacts with TRAF3. Binds to linear ubiquitin chains. Interacts with LC3 family members MAP1LC3A, MAP1LC3B, GABARAP, GABARAPL1 and GABARAPL2; OPTN phosphorylation increases the association (at least with MAP1LC3B). Interacts with RAB12; the interaction may be indirect. Interacts with TBK1; this interaction leads to the Golgi localization of TBK1 and its subsequent activation. Interacts with palmitoyltransferase ZDHHC17/HIP14; the interaction does not lead to palmitoylation of OPTN. Interacts with CYLD. Interacts with TOM1; the interaction is indirect and is mediated by MYO6, which acts as a bridge between TOM1 and OPTN. Interacts with USP12; the interaction is independent of USP12 deubiquitinase activity and may be involved in regulation of autophagic flux. Phosphorylated by TBK1, leading to restrict bacterial proliferation in case of infection. In terms of tissue distribution, present in aqueous humor of the eye (at protein level).

It localises to the cytoplasm. The protein resides in the perinuclear region. Its subcellular location is the golgi apparatus. The protein localises to the trans-Golgi network. It is found in the cytoplasmic vesicle. It localises to the autophagosome. The protein resides in the recycling endosome. Its function is as follows. Plays an important role in the maintenance of the Golgi complex, in membrane trafficking, in exocytosis, through its interaction with myosin VI and Rab8. Links myosin VI to the Golgi complex and plays an important role in Golgi ribbon formation. Negatively regulates the induction of IFNB in response to RNA virus infection. Plays a neuroprotective role in the eye and optic nerve. Probably part of the TNF-alpha signaling pathway that can shift the equilibrium toward induction of cell death. May act by regulating membrane trafficking and cellular morphogenesis via a complex that contains Rab8 and huntingtin (HD). Mediates the interaction of Rab8 with the probable GTPase-activating protein TBC1D17 during Rab8-mediated endocytic trafficking, such as that of transferrin receptor (TFRC/TfR); regulates Rab8 recruitment to tubules emanating from the endocytic recycling compartment. Autophagy receptor that interacts directly with both the cargo to become degraded and an autophagy modifier of the MAP1 LC3 family; targets ubiquitin-coated bacteria (xenophagy) and appears to function in the same pathway as SQSTM1 and CALCOCO2/NDP52. This is Optineurin (OPTN) from Macaca mulatta (Rhesus macaque).